Here is a 526-residue protein sequence, read N- to C-terminus: MSNLFDSDSPTNLAEYSVSELSGSIKRTVETAFDQVRVRGEISGYRGPHSSGHAYFALKDDRARIDAVIWKGTFSRLKFRPEEGMEVIATGKVTTFPGSSKYQIVIETLEPAGAGALMALIEERKRKLGAEGLFDAARKKRLPFMPKVIGVVTSPTGAVIRDILHRISDRFPVHVLVWPVKVQGEGAGDEVANAIRGFNALEPGGAIARPDVLIVARGGGSLEDLWSFNDEIVVRAAAESRIPLISAVGHETDWTLIDYAADVRAPTPTGAAEMAVPVKAELEAQATALAARLQGCINRQMDQRRQSVRALMRALPSLDQLLALPRRRFDEAAAGLGRGLELNTINKRRGFERVASHLRPDVLSNRIAERRQLLNDRMARAERTVERLLDRSKSRIDRAEAILASLPTRLKTQTDRGRERLGNLTRHADTAIRHQLTRARAELSAQDRVLQSLSYKNVLKRGYAVIRDEDDRPVSQAAALSAGMGIAIEFADGRVGAMTTEGGTPPAGAKKRSAKPADPTKQGSLF.

A disordered region spans residues 496–526 (GAMTTEGGTPPAGAKKRSAKPADPTKQGSLF).

Belongs to the XseA family. In terms of assembly, heterooligomer composed of large and small subunits.

The protein resides in the cytoplasm. The catalysed reaction is Exonucleolytic cleavage in either 5'- to 3'- or 3'- to 5'-direction to yield nucleoside 5'-phosphates.. In terms of biological role, bidirectionally degrades single-stranded DNA into large acid-insoluble oligonucleotides, which are then degraded further into small acid-soluble oligonucleotides. The chain is Exodeoxyribonuclease 7 large subunit from Rhizobium etli (strain CIAT 652).